Consider the following 295-residue polypeptide: Sulfotransferase 1E1 (295 aa).

48 to 53 is a 3'-phosphoadenylyl sulfate binding site; the sequence is KSGSTW. Residue 106–108 participates in substrate binding; sequence KTH. Catalysis depends on histidine 108, which acts as the Proton acceptor. Residues arginine 130 and serine 138 each contribute to the 3'-phosphoadenylyl sulfate site. Serine 156 carries the post-translational modification Phosphoserine. 3'-phosphoadenylyl sulfate is bound by residues tyrosine 193, 227–232, and 257–259; these read TSFQEM and RKG.

Belongs to the sulfotransferase 1 family. As to quaternary structure, homodimer. In terms of tissue distribution, liver of young mature males and uterus.

Its subcellular location is the cytoplasm. It localises to the cytosol. The catalysed reaction is estrone + 3'-phosphoadenylyl sulfate = estrone 3-sulfate + adenosine 3',5'-bisphosphate + H(+). It carries out the reaction (24S)-hydroxycholesterol + 3'-phosphoadenylyl sulfate = (24S)-hydroxycholesterol 3-sulfate + adenosine 3',5'-bisphosphate + H(+). The enzyme catalyses 17beta-estradiol + 3'-phosphoadenylyl sulfate = 17beta-estradiol 3-sulfate + adenosine 3',5'-bisphosphate + H(+). It catalyses the reaction 3beta-hydroxyandrost-5-en-17-one + 3'-phosphoadenylyl sulfate = dehydroepiandrosterone 3-sulfate + adenosine 3',5'-bisphosphate + H(+). The catalysed reaction is 4-ethylphenol + 3'-phosphoadenylyl sulfate = 4-ethylphenyl sulfate + adenosine 3',5'-bisphosphate + H(+). With respect to regulation, inhibited by estradiol. In terms of biological role, sulfotransferase that utilizes 3'-phospho-5'-adenylyl sulfate (PAPS) as sulfonate donor to catalyze the sulfate conjugation of estradiol and estrone. Is a key enzyme in estrogen homeostasis, the sulfation of estrogens leads to their inactivation. Also sulfates dehydroepiandrosterone (DHEA), pregnenolone, (24S)-hydroxycholesterol and xenobiotic compounds like ethinylestradiol, equalenin, diethyl stilbesterol and 1-naphthol at significantly lower efficiency. Does not sulfonate cortisol, testosterone and dopamine. May play a role in gut microbiota-host metabolic interaction. O-sulfonates 4-ethylphenol (4-EP), a dietary tyrosine-derived metabolite produced by gut bacteria. The product 4-EPS crosses the blood-brain barrier and may negatively regulate oligodendrocyte maturation and myelination, affecting the functional connectivity of different brain regions associated with the limbic system. This chain is Sulfotransferase 1E1, found in Rattus norvegicus (Rat).